A 407-amino-acid chain; its full sequence is Phosphopentomutase (407 aa).

Mn(2+)-binding residues include aspartate 10, aspartate 306, histidine 311, aspartate 347, histidine 348, and histidine 359.

Belongs to the phosphopentomutase family. Mn(2+) serves as cofactor.

It localises to the cytoplasm. The enzyme catalyses 2-deoxy-alpha-D-ribose 1-phosphate = 2-deoxy-D-ribose 5-phosphate. It carries out the reaction alpha-D-ribose 1-phosphate = D-ribose 5-phosphate. It functions in the pathway carbohydrate degradation; 2-deoxy-D-ribose 1-phosphate degradation; D-glyceraldehyde 3-phosphate and acetaldehyde from 2-deoxy-alpha-D-ribose 1-phosphate: step 1/2. Isomerase that catalyzes the conversion of deoxy-ribose 1-phosphate (dRib-1-P) and ribose 1-phosphate (Rib-1-P) to deoxy-ribose 5-phosphate (dRib-5-P) and ribose 5-phosphate (Rib-5-P), respectively. This is Phosphopentomutase from Serratia proteamaculans (strain 568).